The chain runs to 370 residues: Aminomethyltransferase (370 aa).

This sequence belongs to the GcvT family. The glycine cleavage system is composed of four proteins: P, T, L and H.

The enzyme catalyses N(6)-[(R)-S(8)-aminomethyldihydrolipoyl]-L-lysyl-[protein] + (6S)-5,6,7,8-tetrahydrofolate = N(6)-[(R)-dihydrolipoyl]-L-lysyl-[protein] + (6R)-5,10-methylene-5,6,7,8-tetrahydrofolate + NH4(+). In terms of biological role, the glycine cleavage system catalyzes the degradation of glycine. This chain is Aminomethyltransferase, found in Corynebacterium aurimucosum (strain ATCC 700975 / DSM 44827 / CIP 107346 / CN-1) (Corynebacterium nigricans).